The following is a 292-amino-acid chain: RNA 5'-monophosphate methyltransferase (292 aa).

The disordered stretch occupies residues 1–20; sequence MAVPTELHGGSVKETAAEKE. S-adenosyl-L-methionine-binding positions include Arg-46, Asn-76, Asp-110, 135–136, and Met-164; that span reads DF. The Bin3-type SAM domain occupies 53–274; that stretch reads ELLRQLFPES…KQTIETHPIP (222 aa).

It belongs to the methyltransferase superfamily. In terms of assembly, interacts with DICER1; the interaction may be mediated by RNA.

It localises to the cytoplasm. It carries out the reaction a 5'-end 5'-phospho-ribonucleoside-RNA + S-adenosyl-L-methionine = a 5'-end (5'-methylphospho)-ribonucleoside-RNA + S-adenosyl-L-homocysteine. The enzyme catalyses a 5'-end 5'-phospho-ribonucleoside-RNA + 2 S-adenosyl-L-methionine = a 5'-end (5'-bismethylphospho)-ribonucleoside-RNA + 2 S-adenosyl-L-homocysteine. O-methyltransferase that specifically monomethylates 5'-monophosphate of cytoplasmic histidyl tRNA (tRNA(His)), acting as a capping enzyme by protecting tRNA(His) from cleavage by DICER1. Also able, with less efficiently, to methylate the 5' monophosphate of a subset of pre-miRNAs, acting as a negative regulator of miRNA processing. The 5' monophosphate of pre-miRNAs is recognized by DICER1 and is required for pre-miRNAs processing: methylation at this position reduces the processing of pre-miRNAs by DICER1. Was also reported to mediate dimethylation of pre-miR-145; however dimethylation cannot be reproduced by another group which observes a monomethylation of pre-miR-145. The chain is RNA 5'-monophosphate methyltransferase (BCDIN3D) from Pongo abelii (Sumatran orangutan).